Here is a 255-residue protein sequence, read N- to C-terminus: Zinc D-Ala-D-Ala carboxypeptidase (255 aa).

Positions 1–42 are cleaved as a signal peptide; sequence MRPRPIRLLLTALVGAGLAFAPVSAVAAPTATASASADVGAL. Aspartate 43 carries the blocked amino end (Asp) modification. 2 disulfides stabilise this stretch: cysteine 45/cysteine 123 and cysteine 136/cysteine 184. Arginine 180 provides a ligand contact to substrate. Histidine 196 contributes to the Zn(2+) binding site. A disulfide bridge links cysteine 212 with cysteine 253. Histidine 234 acts as the Proton donor in catalysis. Histidine 237 and histidine 239 together coordinate Zn(2+).

This sequence belongs to the peptidase M15 family. Zn(2+) serves as cofactor. In terms of processing, the N-terminus is partially blocked as a result of the cyclization of the first two amino acids into anhydroaspartylglycine imide.

The protein localises to the secreted. It catalyses the reaction Cleavage of the bond: (Ac)2-L-lysyl-D-alanyl-|-D-alanine.. Its function is as follows. This enzyme catalyzes carboxypeptidation and transpeptidation reactions involved in bacterial cell wall metabolism. It effectively catalyzes the transfer of the N-alpha, N-epsilon-diacetyl-L-lysyl-D-alanyl electrophilic group of the standard tripeptide substrate N-alpha,N-epsilon-diacetyl-L-lysyl-D-alanyl-D-alanine to water. It also performs a weak beta-lactamase activity, hydrolyzing penicillin into penicilloate at a very low rate. The polypeptide is Zinc D-Ala-D-Ala carboxypeptidase (Streptomyces albus G).